The following is a 611-amino-acid chain: Probable inactive purple acid phosphatase 27 (611 aa).

The N-terminal stretch at 1–18 (MARNFLLVLLWFIVQVSS) is a signal peptide. N-linked (GlcNAc...) asparagine glycans are attached at residues Asn263 and Asn271. Asp293 is a binding site for Fe cation. N-linked (GlcNAc...) asparagine glycosylation is present at Asn314. The Fe cation site is built by Asp334 and Tyr337. Asp334 is a Zn(2+) binding site. Residues Asn367, His456, and His498 each contribute to the Zn(2+) site. Position 367 (Asn367) interacts with substrate. Residue 498–500 (HVH) coordinates substrate. His500 is a Fe cation binding site.

Belongs to the metallophosphoesterase superfamily. Purple acid phosphatase family. Homodimer. The cofactor is Fe cation. Requires Zn(2+) as cofactor. In terms of tissue distribution, expressed in roots, stems, leaves, flowers and siliques.

Its subcellular location is the secreted. In Arabidopsis thaliana (Mouse-ear cress), this protein is Probable inactive purple acid phosphatase 27 (PAP27).